The sequence spans 228 residues: L-ribulose-5-phosphate 4-epimerase UlaF (228 aa).

Substrate contacts are provided by residues 26–27, 43–44, and 72–73; these read GN, SG, and SS. Residues aspartate 74, histidine 93, and histidine 95 each coordinate Zn(2+). The active-site Proton donor/acceptor is the aspartate 118. Histidine 167 provides a ligand contact to Zn(2+). Residue tyrosine 225 is the Proton donor/acceptor of the active site.

This sequence belongs to the aldolase class II family. AraD/FucA subfamily. Requires Zn(2+) as cofactor.

The enzyme catalyses L-ribulose 5-phosphate = D-xylulose 5-phosphate. Its pathway is cofactor degradation; L-ascorbate degradation; D-xylulose 5-phosphate from L-ascorbate: step 4/4. Its function is as follows. Catalyzes the isomerization of L-ribulose 5-phosphate to D-xylulose 5-phosphate. Is involved in the anaerobic L-ascorbate utilization. The protein is L-ribulose-5-phosphate 4-epimerase UlaF of Escherichia coli O7:K1 (strain IAI39 / ExPEC).